The chain runs to 219 residues: Aspartic protease inhibitor 10 (219 aa).

An N-terminal signal peptide occupies residues M1–T23. The propeptide occupies S24–S32. A Vacuolar targeting signal motif is present at residues N26 to P31. The N-linked (GlcNAc...) asparagine glycan is linked to N51. 2 disulfides stabilise this stretch: C80-C125 and C173-C184.

The protein belongs to the protease inhibitor I3 (leguminous Kunitz-type inhibitor) family. In tubers and green buds of untreated plants. After abscisic acid treatment or mechanical wounding is mostly accumulated in leaves, to a lesser extent in stems, but not in roots.

Functionally, inhibitor of cathepsin D (aspartic protease) and trypsin (serine protease). Protects the plant by inhibiting proteases of invading organisms. This chain is Aspartic protease inhibitor 10 (CDI), found in Solanum tuberosum (Potato).